A 113-amino-acid polypeptide reads, in one-letter code: UPF0342 protein SZO_10960 (113 aa).

This sequence belongs to the UPF0342 family.

The protein is UPF0342 protein SZO_10960 of Streptococcus equi subsp. zooepidemicus (strain H70).